Here is a 1119-residue protein sequence, read N- to C-terminus: Agglutinin-like protein 3 (1119 aa).

The N-terminal stretch at 1–17 (MLQQYTLLLIYLSVATA) is a signal peptide. 4 disulfide bridges follow: C73-C150, C96-C112, C205-C298, and C227-C256. ALS repeat units lie at residues 365-396 (TTITTSYVGVTTSYSTKTAPIGETATVIVDIP), 401-432 (TTVTSKWTGTITSTTTHTNPTDSIDTVIVQVP), and 438-469 (VTTTEYWSQSFATTTTITGPPGNTDTVLIREP). N471 carries an N-linked (GlcNAc...) asparagine glycan. ALS repeat units lie at residues 474–505 (VTTTEYWSESYTTTSTFTAPPGGTDSVIIKEP) and 510–541 (VTTTEYWSESYTTTSTFTAPPGGTDSVIIKEP). N543 carries N-linked (GlcNAc...) asparagine glycosylation. An ALS 6 repeat occupies 546–577 (VTTTEYWSQSYTTTTTVTAPPGGTDTVLVREP). N-linked (GlcNAc...) asparagine glycosylation occurs at N579. ALS repeat units lie at residues 582–613 (VTTTEYWSQSYTTTTTVIAPPGGTDSVIIREP) and 618–649 (VTTTEYWSQSYATTTTITAPPGETDTVLIREP). The N-linked (GlcNAc...) asparagine glycan is linked to N651. Residues 654–685 (VTTTEYWSQSYATTTTITAPPGETDTVLIREP) form an ALS 9 repeat. N-linked (GlcNAc...) asparagine glycosylation is present at N687. One copy of the ALS 10 repeat lies at 690–721 (VTTTEYWSQSFATTTTVTAPPGGTDTVIIREP). A glycan (N-linked (GlcNAc...) asparagine) is linked at N723. Residues 726–757 (VTTTEYWSQSYATTTTITAPPGETDTVLIREP) form an ALS 11 repeat. N759 carries N-linked (GlcNAc...) asparagine glycosylation. 2 ALS repeats span residues 762-793 (VTTTEYWSQSYATTTTIIAPPGETDTVLIREP) and 798-827 (VTTTEYWSQSYTTATTVTAPPGGTDTVIIY). N-linked (GlcNAc...) asparagine glycosylation is present at N845. The interval 892–1077 (MVTNTVDSTT…QYNSDTQQTT (186 aa)) is disordered. Low complexity predominate over residues 894–929 (TNTVDSTTTESTSQSPSGIFSESGVSVETESSTVTT). Composition is skewed to polar residues over residues 930-941 (AQTNPSVPTTES) and 947-965 (TKGNNENGPYESPSTNVKS). A compositionally biased stretch (low complexity) spans 974–983 (TTSTAASTST). An N-linked (GlcNAc...) asparagine glycan is attached at N987. Composition is skewed to low complexity over residues 998-1022 (ASSPIISSSADETTTVTTTAESTSV) and 1035-1048 (APSATSSPSTTTTA). Residues N1050 and N1061 are each glycosylated (N-linked (GlcNAc...) asparagine). The span at 1057-1077 (TTSTNQSQSQSQYNSDTQQTT) shows a compositional bias: low complexity. S1098 carries GPI-anchor amidated serine lipidation. A propeptide spans 1099-1119 (GSVIQHSTWLCGLITLLSLFI) (removed in mature form).

Belongs to the ALS family. In terms of processing, the GPI-anchor is attached to the protein in the endoplasmic reticulum and serves to target the protein to the cell surface. There, the glucosamine-inositol phospholipid moiety is cleaved off and the GPI-modified mannoprotein is covalently attached via its lipidless GPI glycan remnant to the 1,6-beta-glucan of the outer cell wall layer.

The protein localises to the cell membrane. It is found in the secreted. Its subcellular location is the cell wall. Functionally, cell surface adhesion protein which mediates both yeast-to-host tissue adherence and yeast aggregation. Plays an important role in the biofilm formation and pathogenesis of C.albicans infections. Necessary for C.albicans to bind to N-cadherin on endothelial cells and E-cadherin on oral epithelial cells and subsequent endocytosis by these cells. During disseminated infection, mediates initial trafficking to the brain and renal cortex and contributes to fungal persistence in the kidneys. This chain is Agglutinin-like protein 3 (ALS3), found in Candida albicans (Yeast).